Consider the following 359-residue polypeptide: Peptide chain release factor 1 (359 aa).

Position 233 is an N5-methylglutamine (Q233).

It belongs to the prokaryotic/mitochondrial release factor family. Methylated by PrmC. Methylation increases the termination efficiency of RF1.

The protein localises to the cytoplasm. Peptide chain release factor 1 directs the termination of translation in response to the peptide chain termination codons UAG and UAA. This chain is Peptide chain release factor 1, found in Clostridium acetobutylicum (strain ATCC 824 / DSM 792 / JCM 1419 / IAM 19013 / LMG 5710 / NBRC 13948 / NRRL B-527 / VKM B-1787 / 2291 / W).